Reading from the N-terminus, the 98-residue chain is Putative pterin-4-alpha-carbinolamine dehydratase (98 aa).

Belongs to the pterin-4-alpha-carbinolamine dehydratase family.

It catalyses the reaction (4aS,6R)-4a-hydroxy-L-erythro-5,6,7,8-tetrahydrobiopterin = (6R)-L-erythro-6,7-dihydrobiopterin + H2O. This Roseobacter denitrificans (strain ATCC 33942 / OCh 114) (Erythrobacter sp. (strain OCh 114)) protein is Putative pterin-4-alpha-carbinolamine dehydratase.